The following is a 369-amino-acid chain: 3-dehydroquinate synthase (369 aa).

Residues D75–K80, G109–D113, T133–T134, K146, K155, and T173–T176 contribute to the NAD(+) site. Zn(2+) is bound by residues E188, H251, and H268.

The protein belongs to the sugar phosphate cyclases superfamily. Dehydroquinate synthase family. Co(2+) serves as cofactor. Zn(2+) is required as a cofactor. Requires NAD(+) as cofactor.

It is found in the cytoplasm. The catalysed reaction is 7-phospho-2-dehydro-3-deoxy-D-arabino-heptonate = 3-dehydroquinate + phosphate. Its pathway is metabolic intermediate biosynthesis; chorismate biosynthesis; chorismate from D-erythrose 4-phosphate and phosphoenolpyruvate: step 2/7. Catalyzes the conversion of 3-deoxy-D-arabino-heptulosonate 7-phosphate (DAHP) to dehydroquinate (DHQ). The protein is 3-dehydroquinate synthase of Legionella pneumophila (strain Corby).